Consider the following 98-residue polypeptide: U1-theraphotoxin-Ap1a (98 aa).

The N-terminal stretch at 1–23 (MRSLTLAAVLACSLLLVFHTSAA) is a signal peptide. Residues 24 to 50 (EELEVQDGHLMNPGDGDTALATVDDER) constitute a propeptide that is removed on maturation. Cystine bridges form between Cys54–Cys84, Cys58–Cys90, and Cys72–Cys95. Residues 63–84 (DGKSKEGKPCKPKGDKNKDKKC) form a disordered region.

Belongs to the neurotoxin 12 (Hwtx-2) family. 01 (Ap1a) subfamily. In terms of tissue distribution, expressed by the venom gland.

The protein localises to the secreted. Is toxic to both insects and mammals. Induces reversible paralysis when injected into S.frugiperda larvae. Reduces both the amplitude and frequency of responses from muscle (GF-TTM and GF-DLM) pathways in the D.melanogaster giant fiber circuit, suggesting an action at the neuromuscular junction, which is mediated by glutamatergic receptors. In mice, intracranial injection of 30 ug causes increased urination, myoclonus, hypermotility with circular movements followed by respiratory and generalized seizures resulting in death within 25-35 minutes of injection. The sequence is that of U1-theraphotoxin-Ap1a from Acanthoscurria paulensis (Brazilian giant black tarantula spider).